Reading from the N-terminus, the 426-residue chain is 3-phosphoshikimate 1-carboxyvinyltransferase (426 aa).

3-phosphoshikimate contacts are provided by K22, S23, and R27. K22 provides a ligand contact to phosphoenolpyruvate. Phosphoenolpyruvate-binding residues include G96 and R124. 3-phosphoshikimate contacts are provided by S170, S171, Q172, S198, D314, N337, and K341. Phosphoenolpyruvate is bound at residue Q172. D314 functions as the Proton acceptor in the catalytic mechanism. R345, R387, and K412 together coordinate phosphoenolpyruvate.

The protein belongs to the EPSP synthase family. Monomer.

Its subcellular location is the cytoplasm. The enzyme catalyses 3-phosphoshikimate + phosphoenolpyruvate = 5-O-(1-carboxyvinyl)-3-phosphoshikimate + phosphate. Its pathway is metabolic intermediate biosynthesis; chorismate biosynthesis; chorismate from D-erythrose 4-phosphate and phosphoenolpyruvate: step 6/7. Catalyzes the transfer of the enolpyruvyl moiety of phosphoenolpyruvate (PEP) to the 5-hydroxyl of shikimate-3-phosphate (S3P) to produce enolpyruvyl shikimate-3-phosphate and inorganic phosphate. The polypeptide is 3-phosphoshikimate 1-carboxyvinyltransferase (Colwellia psychrerythraea (strain 34H / ATCC BAA-681) (Vibrio psychroerythus)).